Here is a 545-residue protein sequence, read N- to C-terminus: Chaperonin GroEL (545 aa).

ATP-binding positions include Thr-30–Pro-33, Lys-51, Asp-87–Thr-91, Gly-415, and Asp-495.

This sequence belongs to the chaperonin (HSP60) family. In terms of assembly, forms a cylinder of 14 subunits composed of two heptameric rings stacked back-to-back. Interacts with the co-chaperonin GroES.

It localises to the cytoplasm. It carries out the reaction ATP + H2O + a folded polypeptide = ADP + phosphate + an unfolded polypeptide.. Together with its co-chaperonin GroES, plays an essential role in assisting protein folding. The GroEL-GroES system forms a nano-cage that allows encapsulation of the non-native substrate proteins and provides a physical environment optimized to promote and accelerate protein folding. This is Chaperonin GroEL from Shewanella oneidensis (strain ATCC 700550 / JCM 31522 / CIP 106686 / LMG 19005 / NCIMB 14063 / MR-1).